Consider the following 323-residue polypeptide: Annexin A3 (323 aa).

Ala-2 is modified (N-acetylalanine). Annexin repeat units lie at residues 18 to 89 (FSPS…ALVT), 90 to 161 (PPAV…TLAD), 173 to 245 (HLAK…AIVN), and 249 to 320 (NTPA…KICG). Thr-267 is subject to Phosphothreonine.

It belongs to the annexin family.

Its function is as follows. Inhibitor of phospholipase A2, also possesses anti-coagulant properties. Also cleaves the cyclic bond of inositol 1,2-cyclic phosphate to form inositol 1-phosphate. In Homo sapiens (Human), this protein is Annexin A3 (ANXA3).